Here is a 268-residue protein sequence, read N- to C-terminus: MADS-box protein FBP24 (268 aa).

The region spanning methionine 4–proline 64 is the MADS-box domain. The K-box domain maps to arginine 88 to tyrosine 178. The interval asparagine 243–aspartate 268 is disordered.

The protein resides in the nucleus. Probable transcription factor. The chain is MADS-box protein FBP24 (FBP24) from Petunia hybrida (Petunia).